A 323-amino-acid polypeptide reads, in one-letter code: Oligopeptide transport ATP-binding protein OppD (323 aa).

The ABC transporter domain occupies 5-254 (LDVKNLYVRF…PTHPYSIGLM (250 aa)). An ATP-binding site is contributed by 41-48 (GESGSGKS).

Belongs to the ABC transporter superfamily. In terms of assembly, the complex is composed of two ATP-binding proteins (OppD and OppF), two transmembrane proteins (OppB and OppC) and a solute-binding protein (OppA or MppA).

The protein localises to the cell inner membrane. It carries out the reaction a [peptide](out) + ATP + H2O = a [peptide](in) + ADP + phosphate + H(+). Its function is as follows. Part of the ABC transporter complex OppABCDF involved in the uptake of oligopeptides. Probably responsible for energy coupling to the transport system. The chain is Oligopeptide transport ATP-binding protein OppD (oppD) from Haemophilus influenzae (strain ATCC 51907 / DSM 11121 / KW20 / Rd).